Reading from the N-terminus, the 184-residue chain is Photosystem I assembly protein Ycf4 (184 aa).

The next 2 helical transmembrane spans lie at F22–S42 and I57–S77.

Belongs to the Ycf4 family.

Its subcellular location is the plastid. It is found in the chloroplast thylakoid membrane. Seems to be required for the assembly of the photosystem I complex. This chain is Photosystem I assembly protein Ycf4, found in Aethionema grandiflorum (Persian stone-cress).